Here is a 266-residue protein sequence, read N- to C-terminus: MNYLNKIRIENPLTICYTNDVVKNFTANGLLSIGASPAMSEAPEEAEEFYKVAQGLLINIGTLTAENEQDIIAIAQTANEAGLPIVFDPVAVGASTYRKQFCKLLLKSAKVSVIKGNASEILALIDDTATMKGTDSDANLDAVTIAKKAYATYKTAIVITGKEDVIVQDNKAIVLANGSPLLARVTGAGCLLGGVIAGFLFRETEPDIEALIEAVSVFNIAAEVAAENENCGGPGTFSPLLLDTLYHLNETTYQQRIRIQEVEKYV.

Position 39 (methionine 39) interacts with substrate. Residues lysine 115 and threonine 160 each contribute to the ATP site. Glycine 187 contributes to the substrate binding site.

Belongs to the Thz kinase family. It depends on Mg(2+) as a cofactor.

It catalyses the reaction 5-(2-hydroxyethyl)-4-methylthiazole + ATP = 4-methyl-5-(2-phosphooxyethyl)-thiazole + ADP + H(+). Its pathway is cofactor biosynthesis; thiamine diphosphate biosynthesis; 4-methyl-5-(2-phosphoethyl)-thiazole from 5-(2-hydroxyethyl)-4-methylthiazole: step 1/1. Catalyzes the phosphorylation of the hydroxyl group of 4-methyl-5-beta-hydroxyethylthiazole (THZ). The chain is Hydroxyethylthiazole kinase from Staphylococcus aureus (strain MSSA476).